We begin with the raw amino-acid sequence, 280 residues long: Ribonuclease Z (280 aa).

Positions 61, 63, 65, 66, 153, 176, and 240 each coordinate Zn(2+). Aspartate 65 serves as the catalytic Proton acceptor.

The protein belongs to the RNase Z family. In terms of assembly, homodimer. Zn(2+) serves as cofactor.

The enzyme catalyses Endonucleolytic cleavage of RNA, removing extra 3' nucleotides from tRNA precursor, generating 3' termini of tRNAs. A 3'-hydroxy group is left at the tRNA terminus and a 5'-phosphoryl group is left at the trailer molecule.. Functionally, zinc phosphodiesterase, which displays some tRNA 3'-processing endonuclease activity. Probably involved in tRNA maturation, by removing a 3'-trailer from precursor tRNA. This is Ribonuclease Z from Mycobacterium bovis (strain BCG / Pasteur 1173P2).